Consider the following 493-residue polypeptide: Aspartyl/glutamyl-tRNA(Asn/Gln) amidotransferase subunit B (493 aa).

Belongs to the GatB/GatE family. GatB subfamily. As to quaternary structure, heterotrimer of A, B and C subunits.

The enzyme catalyses L-glutamyl-tRNA(Gln) + L-glutamine + ATP + H2O = L-glutaminyl-tRNA(Gln) + L-glutamate + ADP + phosphate + H(+). It carries out the reaction L-aspartyl-tRNA(Asn) + L-glutamine + ATP + H2O = L-asparaginyl-tRNA(Asn) + L-glutamate + ADP + phosphate + 2 H(+). In terms of biological role, allows the formation of correctly charged Asn-tRNA(Asn) or Gln-tRNA(Gln) through the transamidation of misacylated Asp-tRNA(Asn) or Glu-tRNA(Gln) in organisms which lack either or both of asparaginyl-tRNA or glutaminyl-tRNA synthetases. The reaction takes place in the presence of glutamine and ATP through an activated phospho-Asp-tRNA(Asn) or phospho-Glu-tRNA(Gln). The protein is Aspartyl/glutamyl-tRNA(Asn/Gln) amidotransferase subunit B of Aromatoleum aromaticum (strain DSM 19018 / LMG 30748 / EbN1) (Azoarcus sp. (strain EbN1)).